Reading from the N-terminus, the 193-residue chain is Holliday junction branch migration complex subunit RuvA (193 aa).

Residues 1–64 are domain I; that stretch reads MIGRIAGVLL…EDAHLLYGFG (64 aa). Residues 65 to 139 form a domain II region; sequence TAEERSTFRE…GKIGADLGAM (75 aa). Residues 139–143 form a flexible linker region; sequence MAGAA. Residues 144-193 form a domain III region; it reads SASDHASDILNALLALGYSEKEALTAVKNVPAGTGVSEGIKLALKALSKG.

This sequence belongs to the RuvA family. Homotetramer. Forms an RuvA(8)-RuvB(12)-Holliday junction (HJ) complex. HJ DNA is sandwiched between 2 RuvA tetramers; dsDNA enters through RuvA and exits via RuvB. An RuvB hexamer assembles on each DNA strand where it exits the tetramer. Each RuvB hexamer is contacted by two RuvA subunits (via domain III) on 2 adjacent RuvB subunits; this complex drives branch migration. In the full resolvosome a probable DNA-RuvA(4)-RuvB(12)-RuvC(2) complex forms which resolves the HJ.

It localises to the cytoplasm. Functionally, the RuvA-RuvB-RuvC complex processes Holliday junction (HJ) DNA during genetic recombination and DNA repair, while the RuvA-RuvB complex plays an important role in the rescue of blocked DNA replication forks via replication fork reversal (RFR). RuvA specifically binds to HJ cruciform DNA, conferring on it an open structure. The RuvB hexamer acts as an ATP-dependent pump, pulling dsDNA into and through the RuvAB complex. HJ branch migration allows RuvC to scan DNA until it finds its consensus sequence, where it cleaves and resolves the cruciform DNA. This chain is Holliday junction branch migration complex subunit RuvA, found in Paraburkholderia phytofirmans (strain DSM 17436 / LMG 22146 / PsJN) (Burkholderia phytofirmans).